Consider the following 254-residue polypeptide: PF03932 family protein CutC (254 aa).

Belongs to the CutC family.

The protein localises to the cytoplasm. This is PF03932 family protein CutC from Yersinia pestis bv. Antiqua (strain Angola).